A 269-amino-acid polypeptide reads, in one-letter code: Peptide deformylase 1B, chloroplastic (269 aa).

A chloroplast-targeting transit peptide spans 1 to 51 (MAARLHLRLGPRLRGFASSFAPLLAAHPRALPLSRMGSVAPLAAARARRGF). Residues Cys168 and His210 each contribute to the Fe cation site. The active site involves Glu211. Fe cation is bound at residue His214.

The protein belongs to the polypeptide deformylase family. Homodimer. Fe(2+) serves as cofactor. In terms of tissue distribution, mainly expressed in mature leaves and sheaths.

Its subcellular location is the plastid. The protein resides in the chloroplast stroma. It localises to the mitochondrion. It catalyses the reaction N-terminal N-formyl-L-methionyl-[peptide] + H2O = N-terminal L-methionyl-[peptide] + formate. With respect to regulation, inhibited by actinonin. Functionally, removes the formyl group from the N-terminal Met of newly synthesized proteins. The protein is Peptide deformylase 1B, chloroplastic (PDF1B) of Oryza sativa subsp. japonica (Rice).